The chain runs to 156 residues: MSRKNQAPKREVLPDPLYNSKIVTRLINRVMLDGKRGTAATIVYDAFSAIKEATGNDALEVFETAMDNIMPVLEVRARRVGGSNYQVPVEVRPERRTTLGLRWLVNASRARGEHTMKDRLAKEIMDAANNTGASVKKREDTHKMAEANRAFAHFRW.

Belongs to the universal ribosomal protein uS7 family. Part of the 30S ribosomal subunit. Contacts proteins S9 and S11.

Its function is as follows. One of the primary rRNA binding proteins, it binds directly to 16S rRNA where it nucleates assembly of the head domain of the 30S subunit. Is located at the subunit interface close to the decoding center, probably blocks exit of the E-site tRNA. This chain is Small ribosomal subunit protein uS7, found in Streptococcus pyogenes serotype M3 (strain ATCC BAA-595 / MGAS315).